A 339-amino-acid polypeptide reads, in one-letter code: Protein LicA (339 aa).

Repeat copies occupy residues 4-7, 8-11, 12-15, 16-19, 20-23, 24-27, 28-31, 32-35, and 36-39. The tract at residues 4 to 39 is 9 X 4 AA tandem repeats of I-N-Q-S; it reads INQSINQSINQSINQSINQSINQSINQSINQSINQS.

Belongs to the peptidase S49 family.

Mediates phase variation of the LOS 6A2 and 12D9 epitopes. Phase variation of H.influenza LOS epitopes expressed by LicA is determined by a translational switch. The protein is Protein LicA (licA) of Haemophilus influenzae.